We begin with the raw amino-acid sequence, 1503 residues long: Transient receptor potential cation channel subfamily M member 2 (1503 aa).

Residues 1 to 20 are disordered; that stretch reads MEPSALRKAGSEQEEGFEGL. Topologically, residues 1 to 752 are cytoplasmic; the sequence is MEPSALRKAG…WWGQLSVDNG (752 aa). Residues threonine 174, asparagine 179, arginine 302, glycine 333, and threonine 336 each contribute to the ADP-D-ribose site. Residue threonine 740 is modified to Phosphothreonine. An intramembrane segment occupies 753 to 769; it reads LWRVTLCMLAFPLLLTG. At 770-795 the chain is on the cytoplasmic side; sequence LISFREKRLQDVGTPAARARAFFTAP. Residues 796-816 traverse the membrane as a helical segment; it reads VVVFHLNILSYFAFLCLFAYV. The Extracellular portion of the chain corresponds to 817-827; sequence LMVDFQPVPSW. Residues 828 to 848 traverse the membrane as a helical segment; the sequence is CECAIYLWLFSLVCEEMRQLF. Glutamate 843 and glutamine 846 together coordinate Ca(2+). Over 849-867 the chain is Cytoplasmic; that stretch reads YDPDECGLMKKAALYFSDF. A helical transmembrane segment spans residues 868–888; it reads WNKLDVGAILLFVAGLTCRLI. Residue asparagine 869 participates in Ca(2+) binding. At 889-896 the chain is on the extracellular side; it reads PATLYPGR. Residues 897-917 form a helical membrane-spanning segment; that stretch reads VILSLDFILFCLRLMHIFTIS. Topologically, residues 918–929 are cytoplasmic; that stretch reads KTLGPKIIIVKR. The chain crosses the membrane as a helical span at residues 930–950; that stretch reads MMKDVFFFLFLLAVWVVSFGV. Topologically, residues 951 to 970 are extracellular; sequence AKQAILIHNERRVDWLFRGA. The pore-forming intramembrane region spans 971–985; that stretch reads VYHSYLTIFGQIPGY. Residues 979-982 carry the Selectivity filter motif; it reads FGQI. Residues 986-1022 are Extracellular-facing; sequence IDGVNFNPEHCSPNGTDPYKPKCPESDATQQRPAFPE. An intrachain disulfide couples cysteine 996 to cysteine 1008. Residues 1023-1044 form a helical membrane-spanning segment; sequence WLTVLLLCLYLLFTNILLLNLL. Over 1045–1079 the chain is Cytoplasmic; that stretch reads IAMFNYTFQQVQEHTDQIWKFQRHDLIEEYHGRPA. Glutamate 1073 contacts Ca(2+). The stretch at 1080–1098 is an intramembrane region; sequence APPPFILLSHLQLFIKRVV. Over 1099–1503 the chain is Cytoplasmic; sequence LKTPAKRHKQ…KAAAEFGAHY (405 aa). The segment at 1206 to 1237 is disordered; that stretch reads EADVPTLASQKAAEEPDAEPGGRKKTEEPGDS. The Nudix hydrolase domain maps to 1354–1498; it reads RWRRNEDGAI…KTLLQKAAAE (145 aa). ADP-D-ribose contacts are provided by leucine 1381 and serine 1382. The short motif at 1390–1411 is the Nudix box element; it reads GSREPGEMLPRKLKRILRQEHW. 4 residues coordinate ADP-D-ribose: aspartate 1431, arginine 1433, tyrosine 1485, and asparagine 1487.

It belongs to the transient receptor (TC 1.A.4) family. LTrpC subfamily. TRPM2 sub-subfamily. Homotetramer. Isoform 1 can interact with isoform 3. This interaction decreases Ca(2+) influx through isoform 1 and suppresses susceptibility to oxidative stress-induced cell death. In terms of processing, phosphorylation of TRPM2 at Thr-740 by protein kinase C (PKC) counteracts the effect of cytosolic Ca(2+) and elevates the temperature threshold. As to expression, highly expressed in brain and peripheral blood cells, such as neutrophils. Also detected in bone marrow, spleen, heart, liver and lung. Isoform 2 is found in neutrophil granulocytes.

The protein localises to the cell membrane. The protein resides in the perikaryon. It is found in the cell projection. It localises to the cytoplasmic vesicle. Its subcellular location is the lysosome. It carries out the reaction Ca(2+)(in) = Ca(2+)(out). The catalysed reaction is Na(+)(in) = Na(+)(out). Its activity is regulated as follows. Activated by intracellular ADP-ribose, beta-NAD (NAD(+)) and similar compounds, and by oxidative stress caused by reactive oxygen or nitrogen species. Ca(2+) and PI(4,5)P2 are required for channel opening by ADP-ribose. Activation by ADP-ribose and beta-NAD is strongly increased by moderate heat (35 to 40 degrees Celsius). Likewise, reactive oxygen species lower the threshold for activation by moderate heat (37 degrees Celsius). Activated by moderate heat (35 to 40 degrees Celsius). Inactivated by exposure to extracellular pH between 4.0 and 6.5; irreversibly inactivated when open channels are exposed to extracellular pH between 4.0 and 6.5, while pre-exposure of closed channels to extracellular pH 5.5 gives rise to currents that rapidly inactivate, but protects against irreversible inactivation. Inactivated by intracellular ATP. Activated by arachidonic acid. Inhibited by 2-aminoethyl diphenylborinate (2-APB). Nonselective, voltage-independent cation channel that mediates Na(+) and Ca(2+) influx, leading to increased cytoplasmic Ca(2+) levels. Functions as a ligand-gated ion channel, gated by intracellular adenosine diphosphate ribose (ADP-ribose), Ca(2+), warm temperature, and oxidative stress. The precise physiological activators are under debate; the true, physiological activators may be ADP-ribose and ADP-ribose-2'-phosphate. Binding of ADP-ribose to the cytoplasmic Nudix domain causes a conformation change; the channel is primed but still requires Ca(2+) binding to trigger channel opening. Extracellular Ca(2+) passes through the channel and increases channel activity. Contributes to Ca(2+) release from intracellular stores in response to ADP-ribose. Plays a role in numerous processes that involve signaling via intracellular Ca(2+) levels. Besides, mediates the release of lysosomal Zn(2+) stores in response to reactive oxygen species, leading to increased cytosolic Zn(2+) levels. Plays a role in mediating behavorial and physiological responses to moderate heat and thereby contributes to body temperature homeostasis. Plays a role in insulin secretion, a process that requires increased cytoplasmic Ca(2+) levels. Required for normal IFNG and cytokine secretion and normal innate immune immunity in response to bacterial infection. Required for normal phagocytosis and cytokine release by macrophages exposed to zymosan (in vitro). Plays a role in dendritic cell differentiation and maturation, and in dendritic cell chemotaxis via its role in regulating cytoplasmic Ca(2+) levels. Plays a role in the regulation of the reorganization of the actin cytoskeleton and filopodia formation in response to reactive oxygen species via its role in increasing cytoplasmic Ca(2+) and Zn(2+) levels. Confers susceptibility to cell death following oxidative stress. Its function is as follows. Lacks cation channel activity. Does not mediate cation transport in response to oxidative stress or ADP-ribose. Functionally, lacks cation channel activity and negatively regulates the channel activity of isoform 1. Negatively regulates susceptibility to cell death in reposponse to oxidative stress. This is Transient receptor potential cation channel subfamily M member 2 (TRPM2) from Homo sapiens (Human).